A 184-amino-acid chain; its full sequence is GMP synthase [glutamine-hydrolyzing] subunit A (184 aa).

The 182-residue stretch at 3-184 (PLYVVNNHGQ…FENFDGICSE (182 aa)) folds into the Glutamine amidotransferase type-1 domain. Catalysis depends on C75, which acts as the Nucleophile. Active-site residues include H162 and E164.

As to quaternary structure, heterodimer composed of a glutamine amidotransferase subunit (A) and a GMP-binding subunit (B).

The catalysed reaction is XMP + L-glutamine + ATP + H2O = GMP + L-glutamate + AMP + diphosphate + 2 H(+). The protein operates within purine metabolism; GMP biosynthesis; GMP from XMP (L-Gln route): step 1/1. In terms of biological role, catalyzes the synthesis of GMP from XMP. This Methanoculleus marisnigri (strain ATCC 35101 / DSM 1498 / JR1) protein is GMP synthase [glutamine-hydrolyzing] subunit A.